The chain runs to 311 residues: Pyrimidine-specific ribonucleoside hydrolase RihA (311 aa).

H240 is an active-site residue.

The protein belongs to the IUNH family. RihA subfamily.

Functionally, hydrolyzes cytidine or uridine to ribose and cytosine or uracil, respectively. The protein is Pyrimidine-specific ribonucleoside hydrolase RihA of Salmonella agona (strain SL483).